Here is a 110-residue protein sequence, read N- to C-terminus: Small ribosomal subunit protein bS16 (110 aa).

The span at 81 to 104 (VRPAEVLGKQKQEKERSAKKKDAA) shows a compositional bias: basic and acidic residues. The interval 81 to 110 (VRPAEVLGKQKQEKERSAKKKDAAASETSE) is disordered.

Belongs to the bacterial ribosomal protein bS16 family.

This chain is Small ribosomal subunit protein bS16, found in Prochlorococcus marinus (strain NATL2A).